The primary structure comprises 400 residues: Phosphoglycerate kinase (400 aa).

Residues 19-21 (DLN), arginine 38, 61-64 (HLGR), arginine 124, and arginine 161 contribute to the substrate site. ATP is bound by residues lysine 211, glycine 299, glutamate 330, and 356-359 (GGDS).

This sequence belongs to the phosphoglycerate kinase family. Monomer.

The protein resides in the cytoplasm. The enzyme catalyses (2R)-3-phosphoglycerate + ATP = (2R)-3-phospho-glyceroyl phosphate + ADP. The protein operates within carbohydrate degradation; glycolysis; pyruvate from D-glyceraldehyde 3-phosphate: step 2/5. This is Phosphoglycerate kinase from Frankia casuarinae (strain DSM 45818 / CECT 9043 / HFP020203 / CcI3).